A 361-amino-acid polypeptide reads, in one-letter code: MLYNLLLPHIHNSHIANLFHYITFRSGLAIIITLSLSFVTGPILIKFLRTLQKNGQPIRLDGPESHQTKAGTPTMGGIMIILSSCLATLLLADLTNKYIWITLFGFISFGIIGFMDDYAKVTKNNHYGVRGKSKLLLQGIISLIICILLEYTDKNPSHLLNIPFFKNLSLDLGYFYIVFAIFVIVGSSNAVNLTDGLDGLATVPIAFTAGSFALISYLVGNLIYSNYLQLTYIPNTGELTVLCAGLVGSCLGFLWFNAQPAEVFMGDTGSLSLGSILGIISVITKHEVVLSIVGGLFVVETTSVILQVYYFKATKGKRIFKMAPLHHHFEKHGWEESKVVIRFWIISVIFALIGLSSLKLR.

10 consecutive transmembrane segments (helical) span residues 28 to 48, 74 to 94, 99 to 119, 133 to 153, 168 to 188, 203 to 223, 236 to 256, 263 to 283, 288 to 308, and 338 to 358; these read LAIIITLSLSFVTGPILIKFL, TMGGIMIILSSCLATLLLADL, IWITLFGFISFGIIGFMDDYA, SKLLLQGIISLIICILLEYTD, LSLDLGYFYIVFAIFVIVGSS, VPIAFTAGSFALISYLVGNLI, TGELTVLCAGLVGSCLGFLWF, VFMGDTGSLSLGSILGIISVI, VVLSIVGGLFVVETTSVILQV, and KVVIRFWIISVIFALIGLSSL.

Belongs to the glycosyltransferase 4 family. MraY subfamily. Mg(2+) serves as cofactor.

It is found in the cell inner membrane. The enzyme catalyses UDP-N-acetyl-alpha-D-muramoyl-L-alanyl-gamma-D-glutamyl-meso-2,6-diaminopimeloyl-D-alanyl-D-alanine + di-trans,octa-cis-undecaprenyl phosphate = di-trans,octa-cis-undecaprenyl diphospho-N-acetyl-alpha-D-muramoyl-L-alanyl-D-glutamyl-meso-2,6-diaminopimeloyl-D-alanyl-D-alanine + UMP. Its pathway is cell wall biogenesis; peptidoglycan biosynthesis. Catalyzes the initial step of the lipid cycle reactions in the biosynthesis of the cell wall peptidoglycan: transfers peptidoglycan precursor phospho-MurNAc-pentapeptide from UDP-MurNAc-pentapeptide onto the lipid carrier undecaprenyl phosphate, yielding undecaprenyl-pyrophosphoryl-MurNAc-pentapeptide, known as lipid I. The protein is Phospho-N-acetylmuramoyl-pentapeptide-transferase of Rickettsia canadensis (strain McKiel).